A 577-amino-acid chain; its full sequence is Endopolyphosphatase (577 aa).

Topologically, residues 1 to 2 (MR) are cytoplasmic. A helical; Signal-anchor for type II membrane protein membrane pass occupies residues 3-23 (PSVITVAVLFVQSTWASFAFG). Residues 24 to 577 (NPMSMRNKAH…YIGSISDFED (554 aa)) lie on the Vacuolar side of the membrane. 4 N-linked (GlcNAc...) asparagine glycosylation sites follow: Asn-363, Asn-370, Asn-375, and Asn-399. Positions 430–460 (SDYEIDKKKKKKKKNNKKKKKNKRKNIKPGP) are disordered. Residues 437–456 (KKKKKKKNNKKKKKNKRKNI) show a composition bias toward basic residues. An N-linked (GlcNAc...) asparagine glycan is attached at Asn-481.

This sequence belongs to the endopolyphosphatase PPN1 family. A divalent metal cation is required as a cofactor. Processing by proteases in the vacuole may be required for activation.

Its subcellular location is the vacuole membrane. The enzyme catalyses [phosphate](n+1) + n H2O = (n+1) phosphate + n H(+). Functionally, catalyzes the hydrolysis of inorganic polyphosphate (polyP) chains of many hundreds of phosphate residues into shorter lengths. This chain is Endopolyphosphatase (ppn1), found in Schizosaccharomyces pombe (strain 972 / ATCC 24843) (Fission yeast).